The primary structure comprises 187 residues: Large ribosomal subunit protein eL18B (187 aa).

Threonine 134 bears the Phosphothreonine mark. Serine 136 carries the phosphoserine modification.

Belongs to the eukaryotic ribosomal protein eL18 family. In terms of assembly, component of the large ribosomal subunit (LSU). Mature yeast ribosomes consist of a small (40S) and a large (60S) subunit. The 40S small subunit contains 1 molecule of ribosomal RNA (18S rRNA) and at least 33 different proteins. The large 60S subunit contains 3 rRNA molecules (25S, 5.8S and 5S rRNA) and at least 46 different proteins. eL18 interacts with NAP1.

It localises to the cytoplasm. Component of the ribosome, a large ribonucleoprotein complex responsible for the synthesis of proteins in the cell. The small ribosomal subunit (SSU) binds messenger RNAs (mRNAs) and translates the encoded message by selecting cognate aminoacyl-transfer RNA (tRNA) molecules. The large subunit (LSU) contains the ribosomal catalytic site termed the peptidyl transferase center (PTC), which catalyzes the formation of peptide bonds, thereby polymerizing the amino acids delivered by tRNAs into a polypeptide chain. The nascent polypeptides leave the ribosome through a tunnel in the LSU and interact with protein factors that function in enzymatic processing, targeting, and the membrane insertion of nascent chains at the exit of the ribosomal tunnel. This is Large ribosomal subunit protein eL18B (rpl1802) from Schizosaccharomyces pombe (strain 972 / ATCC 24843) (Fission yeast).